The following is a 417-amino-acid chain: Serine hydroxymethyltransferase (417 aa).

(6S)-5,6,7,8-tetrahydrofolate-binding positions include L122 and 126-128 (GHL). The residue at position 230 (K230) is an N6-(pyridoxal phosphate)lysine. 355–357 (SPF) provides a ligand contact to (6S)-5,6,7,8-tetrahydrofolate.

This sequence belongs to the SHMT family. As to quaternary structure, homodimer. The cofactor is pyridoxal 5'-phosphate.

It is found in the cytoplasm. It catalyses the reaction (6R)-5,10-methylene-5,6,7,8-tetrahydrofolate + glycine + H2O = (6S)-5,6,7,8-tetrahydrofolate + L-serine. It functions in the pathway one-carbon metabolism; tetrahydrofolate interconversion. Its pathway is amino-acid biosynthesis; glycine biosynthesis; glycine from L-serine: step 1/1. Its function is as follows. Catalyzes the reversible interconversion of serine and glycine with tetrahydrofolate (THF) serving as the one-carbon carrier. This reaction serves as the major source of one-carbon groups required for the biosynthesis of purines, thymidylate, methionine, and other important biomolecules. Also exhibits THF-independent aldolase activity toward beta-hydroxyamino acids, producing glycine and aldehydes, via a retro-aldol mechanism. The protein is Serine hydroxymethyltransferase of Francisella tularensis subsp. tularensis (strain FSC 198).